A 439-amino-acid polypeptide reads, in one-letter code: Tol-Pal system protein TolB (439 aa).

The N-terminal stretch at 1 to 22 (MKKPLRWLAALTALLLPLSAFA) is a signal peptide.

This sequence belongs to the TolB family. The Tol-Pal system is composed of five core proteins: the inner membrane proteins TolA, TolQ and TolR, the periplasmic protein TolB and the outer membrane protein Pal. They form a network linking the inner and outer membranes and the peptidoglycan layer.

The protein resides in the periplasm. In terms of biological role, part of the Tol-Pal system, which plays a role in outer membrane invagination during cell division and is important for maintaining outer membrane integrity. The protein is Tol-Pal system protein TolB of Xanthomonas campestris pv. campestris (strain 8004).